Here is a 449-residue protein sequence, read N- to C-terminus: Exodeoxyribonuclease 7 large subunit (449 aa).

Belongs to the XseA family. As to quaternary structure, heterooligomer composed of large and small subunits.

Its subcellular location is the cytoplasm. The enzyme catalyses Exonucleolytic cleavage in either 5'- to 3'- or 3'- to 5'-direction to yield nucleoside 5'-phosphates.. In terms of biological role, bidirectionally degrades single-stranded DNA into large acid-insoluble oligonucleotides, which are then degraded further into small acid-soluble oligonucleotides. This is Exodeoxyribonuclease 7 large subunit from Salmonella paratyphi B (strain ATCC BAA-1250 / SPB7).